The primary structure comprises 262 residues: Phosphatidylglycerol--prolipoprotein diacylglyceryl transferase (262 aa).

The next 4 membrane-spanning stretches (helical) occupy residues 17–37 (LAIH…YALG), 57–77 (LIFY…VLFY), 95–115 (GGMS…LFAH), and 119–139 (LGFF…LAAG). Arg-140 is a binding site for a 1,2-diacyl-sn-glycero-3-phospho-(1'-sn-glycerol). A run of 3 helical transmembrane segments spans residues 173–193 (PSQL…LWWY), 200–220 (AGQV…LVEF), and 227–247 (FLGL…PMVL).

This sequence belongs to the Lgt family.

The protein localises to the cell inner membrane. The catalysed reaction is L-cysteinyl-[prolipoprotein] + a 1,2-diacyl-sn-glycero-3-phospho-(1'-sn-glycerol) = an S-1,2-diacyl-sn-glyceryl-L-cysteinyl-[prolipoprotein] + sn-glycerol 1-phosphate + H(+). The protein operates within protein modification; lipoprotein biosynthesis (diacylglyceryl transfer). In terms of biological role, catalyzes the transfer of the diacylglyceryl group from phosphatidylglycerol to the sulfhydryl group of the N-terminal cysteine of a prolipoprotein, the first step in the formation of mature lipoproteins. This Bordetella parapertussis (strain 12822 / ATCC BAA-587 / NCTC 13253) protein is Phosphatidylglycerol--prolipoprotein diacylglyceryl transferase.